Reading from the N-terminus, the 367-residue chain is dTDP-4-amino-4,6-dideoxy-D-glucose transaminase (367 aa).

Lysine 184 carries the N6-(pyridoxal phosphate)lysine modification.

This sequence belongs to the DegT/DnrJ/EryC1 family. Requires pyridoxal 5'-phosphate as cofactor.

It catalyses the reaction dTDP-4-amino-4,6-dideoxy-D-glucose + 2-oxoglutarate = dTDP-4-dehydro-6-deoxy-alpha-D-glucose + L-glutamate. Its pathway is bacterial outer membrane biogenesis; lipopolysaccharide biosynthesis. In terms of biological role, catalyzes the conversion of dTDP-4-dehydro-6-deoxy-D-glucose (dTDP-D-Glc4O) to dTDP-4-amino-4,6-dideoxy-D-glucose (dTDP-D-Qui4N). L-glutamine can also be used as amino donor. The protein is dTDP-4-amino-4,6-dideoxy-D-glucose transaminase (vioA) of Shigella dysenteriae.